We begin with the raw amino-acid sequence, 210 residues long: Small ribosomal subunit protein eS8y (210 aa).

The disordered stretch occupies residues Met-1–Arg-22. A compositionally biased stretch (basic residues) spans Ile-8–Arg-22.

It belongs to the eukaryotic ribosomal protein eS8 family.

The sequence is that of Small ribosomal subunit protein eS8y (RPS8B) from Arabidopsis thaliana (Mouse-ear cress).